Here is a 728-residue protein sequence, read N- to C-terminus: MFVQKSIDLGHGRILSIETGKMAKQADGAAIVRLGDTMVLATVVSSKKTPPLGQDFFPLQVEYREKYSAAGRFPGGFFKREGRPSEKEILSARLIDRALRPLFPDGYYYETQIIISVISSDQVNDGDVLGGLAASAAIMVSDIPFQNPMSEVRVGRVNGLYIINPDVNELKESDIDMCIGGTNDTICMLEGEMNEISETEMLEAIQFGHTAIRKLCVLQQEVAAEVAKPKRLFVPTVIPTELDSFVRANCQSRLRELAYTPLGKEERAERTAAIYNETLAATLEHFRATISSEEAQADTAKALCLNEHIIEDQIHAVEKEVMRHMILDDAKRLDGRALDQVRPITIELGLIPRAHGSALFTRGETQALVTLTLGTQKDAQSVDNLTNSDDKRFYLHYNFPPFSVGECGRLGSIGRREIGHGNLAERSIKMVAPTEAEFPYTIRIVSDILESNGSSSMASVCGGTLALMDGGVPIRKPVSGIAMGLIKENDKYAVLSDILGNEDHLGDMDFKVSGTRDGITACQMDIKIDGLDYHIVENALEQARKGRLHILNEMEKAIPASRTDLATYAPRLTTIKIPSDCIGMVIGKGGETIRGITEETGAEINIADDGTVTIACTTKEGTDAALATIKSLTAKPEVGNIYVGKVRDVRDELGAFVEFLPKTDGLVHISEISSTRVAKVSDHLKVGDKVTVKLVDVRKDPRTGKTKFALSIKALEQPKQEGGEATQN.

Residues D503 and D509 each contribute to the Mg(2+) site. Residues 570 to 629 (PRLTTIKIPSDCIGMVIGKGGETIRGITEETGAEINIADDGTVTIACTTKEGTDAALATI) form the KH domain. Residues 639 to 713 (GNIYVGKVRD…GKTKFALSIK (75 aa)) form the S1 motif domain.

This sequence belongs to the polyribonucleotide nucleotidyltransferase family. The cofactor is Mg(2+).

Its subcellular location is the cytoplasm. The catalysed reaction is RNA(n+1) + phosphate = RNA(n) + a ribonucleoside 5'-diphosphate. Involved in mRNA degradation. Catalyzes the phosphorolysis of single-stranded polyribonucleotides processively in the 3'- to 5'-direction. The polypeptide is Polyribonucleotide nucleotidyltransferase (Chlorobium chlorochromatii (strain CaD3)).